Consider the following 246-residue polypeptide: Carboxy-S-adenosyl-L-methionine synthase (246 aa).

S-adenosyl-L-methionine is bound by residues tyrosine 39, glycine 64 to serine 66, aspartate 89 to asparagine 90, aspartate 121 to isoleucine 122, asparagine 136, and arginine 203.

The protein belongs to the class I-like SAM-binding methyltransferase superfamily. Cx-SAM synthase family. Homodimer.

The catalysed reaction is prephenate + S-adenosyl-L-methionine = carboxy-S-adenosyl-L-methionine + 3-phenylpyruvate + H2O. Catalyzes the conversion of S-adenosyl-L-methionine (SAM) to carboxy-S-adenosyl-L-methionine (Cx-SAM). This chain is Carboxy-S-adenosyl-L-methionine synthase, found in Pseudomonas aeruginosa (strain UCBPP-PA14).